The following is a 288-amino-acid chain: Elongation factor Ts (288 aa).

The interval Thr-80–Leu-83 is involved in Mg(2+) ion dislocation from EF-Tu.

Belongs to the EF-Ts family.

Its subcellular location is the cytoplasm. In terms of biological role, associates with the EF-Tu.GDP complex and induces the exchange of GDP to GTP. It remains bound to the aminoacyl-tRNA.EF-Tu.GTP complex up to the GTP hydrolysis stage on the ribosome. This is Elongation factor Ts from Pseudomonas fluorescens (strain ATCC BAA-477 / NRRL B-23932 / Pf-5).